The chain runs to 242 residues: Floral homeotic protein AGAMOUS (242 aa).

The MADS-box domain occupies 19 to 73 (RGKIEIKRIENTTNRQVTFCKRRNGLLKKAYELSVLCDAEVALIVFSSRGRLYEY). The K-box domain maps to 103 to 193 (AQYYQQEASK…RAKIAETERS (91 aa)).

As to expression, expressed exclusively in stamens and carpels.

It localises to the nucleus. Its function is as follows. Probable transcription factor involved in regulating genes that determines stamen and carpel development in wild-type flowers. This chain is Floral homeotic protein AGAMOUS (AG1), found in Petunia hybrida (Petunia).